We begin with the raw amino-acid sequence, 260 residues long: Thiazole synthase (260 aa).

The active-site Schiff-base intermediate with DXP is Lys-96. 1-deoxy-D-xylulose 5-phosphate-binding positions include Gly-157, 184–185, and 206–207; these read AG and NT.

Belongs to the ThiG family. As to quaternary structure, homotetramer. Forms heterodimers with either ThiH or ThiS.

The protein localises to the cytoplasm. It carries out the reaction [ThiS sulfur-carrier protein]-C-terminal-Gly-aminoethanethioate + 2-iminoacetate + 1-deoxy-D-xylulose 5-phosphate = [ThiS sulfur-carrier protein]-C-terminal Gly-Gly + 2-[(2R,5Z)-2-carboxy-4-methylthiazol-5(2H)-ylidene]ethyl phosphate + 2 H2O + H(+). The protein operates within cofactor biosynthesis; thiamine diphosphate biosynthesis. Catalyzes the rearrangement of 1-deoxy-D-xylulose 5-phosphate (DXP) to produce the thiazole phosphate moiety of thiamine. Sulfur is provided by the thiocarboxylate moiety of the carrier protein ThiS. In vitro, sulfur can be provided by H(2)S. This Bradyrhizobium sp. (strain BTAi1 / ATCC BAA-1182) protein is Thiazole synthase.